The sequence spans 291 residues: Protein ZAR1-like (291 aa).

The interval 103–152 (GSQTLHSSSLSDRTSSRKPTEAWEVGRRALIRRPQDGEDEESQEELTGPT) is disordered. A compositionally biased stretch (low complexity) spans 106-115 (TLHSSSLSDR). Basic and acidic residues predominate over residues 116–129 (TSSRKPTEAWEVGR). A 3CxxC-type zinc finger spans residues 195-280 (LKYGYFHCKD…QELCGHCKDK (86 aa)).

It belongs to the ZAR1 family. Interacts with YBX2. As to expression, expressed in oocytes and zygotes. Predominantly expressed in maturing oocytes before maternal-to-zygotic transition (MZT). Less abundant than Zar1.

It is found in the cytoplasm. The protein resides in the cytoplasmic ribonucleoprotein granule. Functionally, mRNA-binding protein required for maternal mRNA storage, translation and degradation during oocyte maturation. Probably promotes formation of some phase-separated membraneless compartment that stores maternal mRNAs in oocytes: acts by undergoing liquid-liquid phase separation upon binding to maternal mRNAs. Binds to the 3'-UTR of maternal mRNAs, inhibiting their translation. The protein is Protein ZAR1-like of Mus musculus (Mouse).